The chain runs to 419 residues: Imidazolonepropionase (419 aa).

Histidine 87 and histidine 89 together coordinate Fe(3+). Zn(2+) is bound by residues histidine 87 and histidine 89. 4-imidazolone-5-propanoate-binding residues include arginine 96, tyrosine 159, and histidine 192. Tyrosine 159 is a binding site for N-formimidoyl-L-glutamate. Residue histidine 257 participates in Fe(3+) binding. Histidine 257 is a binding site for Zn(2+). Glutamine 260 is a 4-imidazolone-5-propanoate binding site. Aspartate 332 contacts Fe(3+). Residue aspartate 332 coordinates Zn(2+). Residues asparagine 334 and glycine 336 each coordinate N-formimidoyl-L-glutamate. Residue serine 337 participates in 4-imidazolone-5-propanoate binding.

Belongs to the metallo-dependent hydrolases superfamily. HutI family. Zn(2+) serves as cofactor. Fe(3+) is required as a cofactor.

The protein resides in the cytoplasm. The enzyme catalyses 4-imidazolone-5-propanoate + H2O = N-formimidoyl-L-glutamate. It participates in amino-acid degradation; L-histidine degradation into L-glutamate; N-formimidoyl-L-glutamate from L-histidine: step 3/3. Its function is as follows. Catalyzes the hydrolytic cleavage of the carbon-nitrogen bond in imidazolone-5-propanoate to yield N-formimidoyl-L-glutamate. It is the third step in the universal histidine degradation pathway. The protein is Imidazolonepropionase of Alteromonas mediterranea (strain DSM 17117 / CIP 110805 / LMG 28347 / Deep ecotype).